A 203-amino-acid polypeptide reads, in one-letter code: UPF0301 protein Sde_3637 (203 aa).

The protein belongs to the UPF0301 (AlgH) family.

The sequence is that of UPF0301 protein Sde_3637 from Saccharophagus degradans (strain 2-40 / ATCC 43961 / DSM 17024).